The following is a 389-amino-acid chain: Probable dual-specificity RNA methyltransferase RlmN (389 aa).

Catalysis depends on Glu114, which acts as the Proton acceptor. The Radical SAM core domain maps to 120–358 (QHYGLSVCVT…CVVRQEHGTD (239 aa)). A disulfide bond links Cys127 and Cys363. Positions 134, 138, and 141 each coordinate [4Fe-4S] cluster. Residues 186–187 (GE), Ser218, 241–243 (SLH), and Asn319 contribute to the S-adenosyl-L-methionine site. The active-site S-methylcysteine intermediate is Cys363. The disordered stretch occupies residues 370–389 (TMKRDRQKAVAEASGKSEGK). Residues 371-389 (MKRDRQKAVAEASGKSEGK) show a composition bias toward basic and acidic residues.

Belongs to the radical SAM superfamily. RlmN family. Requires [4Fe-4S] cluster as cofactor.

It is found in the cytoplasm. The catalysed reaction is adenosine(2503) in 23S rRNA + 2 reduced [2Fe-2S]-[ferredoxin] + 2 S-adenosyl-L-methionine = 2-methyladenosine(2503) in 23S rRNA + 5'-deoxyadenosine + L-methionine + 2 oxidized [2Fe-2S]-[ferredoxin] + S-adenosyl-L-homocysteine. It carries out the reaction adenosine(37) in tRNA + 2 reduced [2Fe-2S]-[ferredoxin] + 2 S-adenosyl-L-methionine = 2-methyladenosine(37) in tRNA + 5'-deoxyadenosine + L-methionine + 2 oxidized [2Fe-2S]-[ferredoxin] + S-adenosyl-L-homocysteine. In terms of biological role, specifically methylates position 2 of adenine 2503 in 23S rRNA and position 2 of adenine 37 in tRNAs. This Streptococcus thermophilus (strain ATCC BAA-250 / LMG 18311) protein is Probable dual-specificity RNA methyltransferase RlmN.